A 224-amino-acid polypeptide reads, in one-letter code: MSIKEWPEDERPREKLLRQGPGGLSDAELLAIFLRTGVSGLSAVDLSRHLLQQFGSLRALLGAEQRAFCAAHGLGPAKYAQLQAVLEMGKRHLAEQLQRGDPLTSPQLTRDYLQAQLRDRPREVFALLLLDNQHRVIQFVELFYGTLDSASVWPREIVQIALKHNAAAVILAHNHPSGVAEPSRADRQITDRITAALALIDIRVLDHLVIGDGITVSFAERGWL.

One can recognise an MPN domain in the interval 102 to 224 (PLTSPQLTRD…TVSFAERGWL (123 aa)). 3 residues coordinate Zn(2+): His-173, His-175, and Asp-186. Positions 173 to 186 (HNHPSGVAEPSRAD) match the JAMM motif motif.

This sequence belongs to the UPF0758 family.

This Aeromonas hydrophila subsp. hydrophila (strain ATCC 7966 / DSM 30187 / BCRC 13018 / CCUG 14551 / JCM 1027 / KCTC 2358 / NCIMB 9240 / NCTC 8049) protein is UPF0758 protein AHA_0160.